Here is a 288-residue protein sequence, read N- to C-terminus: 4-hydroxybenzoate octaprenyltransferase (288 aa).

The next 8 membrane-spanning stretches (helical) occupy residues 23–43 (IGSLLLLWPTLWALWLAGRGI), 46–66 (AKILVVFVLGVFFMRAAGCVV), 98–118 (ILFVVLILLSFGLVLTLNSMT), 141–161 (LPQVVLGAAFGWSIPMGFAAV), 163–183 (ESLPLVCWLLLLANICWTVAY), 213–233 (LIIGLLQLATLLLMVAIGWLM), 234–254 (NLGGAFYWSILLAGALFTHQQ), and 268–288 (AFLNNNYVGLVLFLGILISYW).

This sequence belongs to the UbiA prenyltransferase family. Mg(2+) is required as a cofactor.

The protein resides in the cell inner membrane. The catalysed reaction is all-trans-octaprenyl diphosphate + 4-hydroxybenzoate = 4-hydroxy-3-(all-trans-octaprenyl)benzoate + diphosphate. It functions in the pathway cofactor biosynthesis; ubiquinone biosynthesis. In terms of biological role, catalyzes the prenylation of para-hydroxybenzoate (PHB) with an all-trans polyprenyl group. Mediates the second step in the final reaction sequence of ubiquinone-8 (UQ-8) biosynthesis, which is the condensation of the polyisoprenoid side chain with PHB, generating the first membrane-bound Q intermediate 3-octaprenyl-4-hydroxybenzoate. This is 4-hydroxybenzoate octaprenyltransferase from Yersinia pestis bv. Antiqua (strain Antiqua).